Here is a 354-residue protein sequence, read N- to C-terminus: uncharacterized protein (354 aa).

A helical membrane pass occupies residues 43–63 (LIAVTLWSCVGSLLFICLLAV).

The protein resides in the cell membrane. This is an uncharacterized protein from Bacillus subtilis (strain 168).